Consider the following 417-residue polypeptide: NADH-quinone oxidoreductase subunit D (417 aa).

Belongs to the complex I 49 kDa subunit family. As to quaternary structure, NDH-1 is composed of 14 different subunits. Subunits NuoB, C, D, E, F, and G constitute the peripheral sector of the complex.

The protein localises to the cell inner membrane. The enzyme catalyses a quinone + NADH + 5 H(+)(in) = a quinol + NAD(+) + 4 H(+)(out). Functionally, NDH-1 shuttles electrons from NADH, via FMN and iron-sulfur (Fe-S) centers, to quinones in the respiratory chain. The immediate electron acceptor for the enzyme in this species is believed to be ubiquinone. Couples the redox reaction to proton translocation (for every two electrons transferred, four hydrogen ions are translocated across the cytoplasmic membrane), and thus conserves the redox energy in a proton gradient. This Burkholderia mallei (strain NCTC 10247) protein is NADH-quinone oxidoreductase subunit D.